The chain runs to 200 residues: Small ribosomal subunit protein uS4 (200 aa).

The interval 22-43 (TGKELERRPYAPGQHGPTQRKK) is disordered. One can recognise an S4 RNA-binding domain in the interval 92-170 (QRLDNIVYRL…VPEYVTFDAE (79 aa)).

The protein belongs to the universal ribosomal protein uS4 family. As to quaternary structure, part of the 30S ribosomal subunit. Contacts protein S5. The interaction surface between S4 and S5 is involved in control of translational fidelity.

One of the primary rRNA binding proteins, it binds directly to 16S rRNA where it nucleates assembly of the body of the 30S subunit. Its function is as follows. With S5 and S12 plays an important role in translational accuracy. The sequence is that of Small ribosomal subunit protein uS4 from Listeria welshimeri serovar 6b (strain ATCC 35897 / DSM 20650 / CCUG 15529 / CIP 8149 / NCTC 11857 / SLCC 5334 / V8).